We begin with the raw amino-acid sequence, 113 residues long: Hydrogenase maturation factor HybF (113 aa).

H2 and E3 together coordinate Ni(2+). 4 residues coordinate Zn(2+): C73, C76, C89, and C92.

Belongs to the HypA/HybF family. HybF subfamily. Monomer.

Functionally, involved in the maturation of [NiFe] hydrogenases. Required for nickel insertion into the metal center of the hydrogenase. HybF is involved in maturation of hydrogenases 1 and 2. It may partially substitute for the function of HypA and vice versa. This Escherichia coli (strain K12) protein is Hydrogenase maturation factor HybF.